The sequence spans 247 residues: Adenosylcobinamide-GDP ribazoletransferase (247 aa).

A run of 6 helical transmembrane segments spans residues 34 to 54, 59 to 79, 113 to 133, 138 to 158, 171 to 191, and 194 to 214; these read IVMF…IFIL, CGIP…TGGF, GGLA…ELAL, MLAA…LLMY, VFIG…AVIV, and VLLP…AIFI.

It belongs to the CobS family. It depends on Mg(2+) as a cofactor.

The protein resides in the cell inner membrane. The enzyme catalyses alpha-ribazole + adenosylcob(III)inamide-GDP = adenosylcob(III)alamin + GMP + H(+). The catalysed reaction is alpha-ribazole 5'-phosphate + adenosylcob(III)inamide-GDP = adenosylcob(III)alamin 5'-phosphate + GMP + H(+). It participates in cofactor biosynthesis; adenosylcobalamin biosynthesis; adenosylcobalamin from cob(II)yrinate a,c-diamide: step 7/7. In terms of biological role, joins adenosylcobinamide-GDP and alpha-ribazole to generate adenosylcobalamin (Ado-cobalamin). Also synthesizes adenosylcobalamin 5'-phosphate from adenosylcobinamide-GDP and alpha-ribazole 5'-phosphate. In Salmonella paratyphi A (strain ATCC 9150 / SARB42), this protein is Adenosylcobinamide-GDP ribazoletransferase.